The chain runs to 306 residues: Homoserine O-acetyltransferase (306 aa).

Cys142 (acyl-thioester intermediate) is an active-site residue. Substrate contacts are provided by Lys163 and Ser192. The active-site Proton acceptor is His235. Glu237 is a catalytic residue. Arg249 contacts substrate.

Belongs to the MetA family.

The protein resides in the cytoplasm. It catalyses the reaction L-homoserine + acetyl-CoA = O-acetyl-L-homoserine + CoA. It functions in the pathway amino-acid biosynthesis; L-methionine biosynthesis via de novo pathway; O-acetyl-L-homoserine from L-homoserine: step 1/1. Its function is as follows. Transfers an acetyl group from acetyl-CoA to L-homoserine, forming acetyl-L-homoserine. The chain is Homoserine O-acetyltransferase from Brucella melitensis biotype 1 (strain ATCC 23456 / CCUG 17765 / NCTC 10094 / 16M).